A 537-amino-acid polypeptide reads, in one-letter code: Cytochrome P450 monooxygenase yanC (537 aa).

The first 21 residues, 1 to 21 (MALVHLTALAACGLLLVILRA), serve as a signal peptide directing secretion. Position 449 (cysteine 449) interacts with heme.

Belongs to the cytochrome P450 family. Heme serves as cofactor.

The protein operates within secondary metabolite biosynthesis; terpenoid biosynthesis. In terms of biological role, cytochrome P450 monooxygenase; part of the gene cluster that mediates the biosynthesis of yanuthone D, a fungal isoprenoid epoxycyclohexenone that acts as an antibiotic against fungi and bacteria. The first step of the pathway is the synthesis of 6-methylsalicylic acid (6-MSA) by the polyketide synthase yanA. 6-MSA is then converted to m-cresol by the decarboxylase yanB. The cytochrome P450 monooxygenase yanC then catalyzes the oxidation of m-cresol to toluquinol. Epoxidation of toluquinol is then performed by the short chain dehydrogenase yanD, with the help of yanE, and a further prenylation by yanG leads to 7-deacetoxyyanuthone A. The next step is the hydroxylation of C-22 of 7-deacetoxyyanuthone A by the cytochrome P450 monooxygenase yanH to yield 22-deacetylyanuthone A. O-Mevalon transferase yanI then attaches mevalon to the hydroxyl group of 22-deacetylyanuthone A to produce yanuthone E. Finally, the FAD-dependent monooxygenase yanF oxidizes the hydroxyl group at C15 of yanuthone E to form yanuthone D. Furthermore, several branching points in the pathway lead to the production of yanuthones F and G from 7-deacetoxyyanuthone A; yanuthones H and I from 22-deacetylyanuthone A; and yanuthone J from yanuthone E. YanC is also involved in the synthesis of yanuthone X1 which does not have 6-methylsalicylic acid (6-MSA) as precursor. This Aspergillus niger (strain ATCC 1015 / CBS 113.46 / FGSC A1144 / LSHB Ac4 / NCTC 3858a / NRRL 328 / USDA 3528.7) protein is Cytochrome P450 monooxygenase yanC.